The following is a 180-amino-acid chain: Stathmin-3 (180 aa).

2 S-palmitoyl cysteine lipidation sites follow: Cys22 and Cys24. An SLD domain is found at 38–180; the sequence is GDMEVKQLDK…NKEQREEMSG (143 aa). Residues Ser50, Ser60, Ser65, Ser68, Ser72, Ser73, and Ser81 each carry the phosphoserine modification. The interval 59–82 is disordered; the sequence is KSPSDLSPESPMLSSPPKKKDTSL. The segment covering 60 to 74 has biased composition (low complexity); the sequence is SPSDLSPESPMLSSP. Residues 76-179 are a coiled coil; it reads KKKDTSLEEL…RNKEQREEMS (104 aa).

This sequence belongs to the stathmin family. As to quaternary structure, interacts with STAT3. Interacts with CLU (secreted form); this interaction may act as an important modulator during neuronal differentiation. N-terminal palmitoylation promotes specific anchoring to the cytosolic leaflet of Golgi membranes and subsequent vesicular trafficking along dendrites and axons. Neuronal Stathmins are substrates for palmitoyltransferases ZDHHC3, ZDHHC7 and ZDHHC15.

It localises to the golgi apparatus. The protein localises to the cell projection. It is found in the growth cone. The protein resides in the axon. Its subcellular location is the cytoplasm. It localises to the cytosol. Exhibits microtubule-destabilizing activity, which is antagonized by STAT3. The chain is Stathmin-3 (STMN3) from Macaca fascicularis (Crab-eating macaque).